The primary structure comprises 250 residues: Envelope glycoprotein L (250 aa).

The N-terminal stretch at 1–18 (MELLLFVMSLILLTFSKA) is a signal peptide. One can recognise a gL betaherpesvirus-type domain in the interval 31–239 (KLDDCIAAVI…ETYNSKLPFR (209 aa)). Cys-136 and Cys-141 are disulfide-bonded.

It belongs to the herpesviridae glycoprotein L (gL) family. Betaherpesvirinae gL subfamily. Interacts with glycoprotein H (gH); this interaction is necessary for the correct processing and cell surface expression of gH. Part of a gH-gL-gO complex.

Its subcellular location is the virion membrane. The protein resides in the host cell membrane. The protein localises to the host Golgi apparatus. It is found in the host trans-Golgi network. Its function is as follows. The heterodimer glycoprotein H-glycoprotein L is required for the fusion of viral and plasma membranes leading to virus entry into the host cell. Acts as a functional inhibitor of gH and maintains gH in an inhibited form. Upon binding to host integrins, gL dissociates from gH leading to activation of the viral fusion glycoproteins gB and gH. This chain is Envelope glycoprotein L, found in Human herpesvirus 6A (strain Uganda-1102) (HHV-6 variant A).